The following is a 543-amino-acid chain: Efflux pump mokI (543 aa).

A run of 13 helical transmembrane segments spans residues 30-50 (LVVT…SIIV), 90-110 (LLTL…GSAL), 125-145 (AVAG…LASA), 153-173 (LLIG…PLLG), 185-205 (CFYI…AIHI), 233-253 (LLGF…LEWG), 261-281 (SSVI…FGFW), 307-327 (LFLG…PIYF), 340-360 (VYML…GAII), 364-384 (GYYI…AGLV), 394-416 (AAWV…TPII), 428-448 (ALGI…FLTL), and 509-529 (VGAS…GLIW).

It belongs to the major facilitator superfamily. TCR/Tet family.

It localises to the membrane. Its function is as follows. Efflux pump; part of the gene cluster that mediates the biosynthesis of monakolin K, also known as lovastatin, and which acts as a potent competitive inhibitor of HMG-CoA reductase. This is Efflux pump mokI from Monascus pilosus (Red mold).